Here is a 109-residue protein sequence, read N- to C-terminus: Large ribosomal subunit protein uL24 (109 aa).

Belongs to the universal ribosomal protein uL24 family. In terms of assembly, part of the 50S ribosomal subunit.

In terms of biological role, one of two assembly initiator proteins, it binds directly to the 5'-end of the 23S rRNA, where it nucleates assembly of the 50S subunit. One of the proteins that surrounds the polypeptide exit tunnel on the outside of the subunit. This chain is Large ribosomal subunit protein uL24, found in Legionella pneumophila subsp. pneumophila (strain Philadelphia 1 / ATCC 33152 / DSM 7513).